A 263-amino-acid chain; its full sequence is Protein TILLER ANGLE CONTROL 1 (263 aa).

The IGT motif motif lies at 55–61 (GILAIGT). The disordered stretch occupies residues 243–263 (GKKIHPEQLNGRSNAEGPLTA).

It belongs to the TAC family. Highly expressed in leaf sheath pulvinus. Expressed in shoot apical meristem and leaves.

In terms of biological role, involved in the regulation of leaf growth angle. Promotes horizontal shoot growth. The polypeptide is Protein TILLER ANGLE CONTROL 1 (Zea mays (Maize)).